The following is a 345-amino-acid chain: N(4)-(Beta-N-acetylglucosaminyl)-L-asparaginase (345 aa).

An N-terminal signal peptide occupies residues 1–23 (MARKWNLPFLLLPLVLGIPLVRG). N-linked (GlcNAc...) asparagine glycosylation occurs at N38. C64 and C69 form a disulfide bridge. N-linked (GlcNAc...) asparagine glycosylation occurs at N149. C163 and C179 form a disulfide bridge. Catalysis depends on T205, which acts as the Nucleophile. Substrate is bound by residues 233–236 (RVGD) and 256–259 (TGDG). An intrachain disulfide couples C285 to C305. The N-linked (GlcNAc...) asparagine glycan is linked to N307. The cysteines at positions 316 and 344 are disulfide-linked.

It belongs to the Ntn-hydrolase family. Heterotetramer of two alpha and two beta chains arranged as a dimer of alpha/beta heterodimers. Post-translationally, N-glycosylated. Cleaved into an alpha and beta chain by autocatalysis; this activates the enzyme. The N-terminal residue of the beta subunit is responsible for the nucleophile hydrolase activity.

Its subcellular location is the lysosome. The catalysed reaction is N(4)-(beta-N-acetyl-D-glucosaminyl)-L-asparagine + H2O = N-acetyl-beta-D-glucosaminylamine + L-aspartate + H(+). Functionally, cleaves the GlcNAc-Asn bond which joins oligosaccharides to the peptide of asparagine-linked glycoproteins. The polypeptide is N(4)-(Beta-N-acetylglucosaminyl)-L-asparaginase (Aga) (Rattus norvegicus (Rat)).